Here is a 224-residue protein sequence, read N- to C-terminus: GrpE protein homolog 2, mitochondrial (224 aa).

A mitochondrion-targeting transit peptide spans 1 to 31; the sequence is MAARSLWAVQRLQRLLASGAMSESRGWLHPF. At Lys141 the chain carries N6-acetyllysine.

It belongs to the GrpE family. Probable component of the PAM complex at least composed of a mitochondrial HSP70 protein, GRPEL1 or GRPEL2, TIMM44, TIMM16/PAM16 and TIMM14/DNAJC19. In terms of tissue distribution, ubiquitous.

It localises to the mitochondrion matrix. Functionally, essential component of the PAM complex, a complex required for the translocation of transit peptide-containing proteins from the inner membrane into the mitochondrial matrix in an ATP-dependent manner. Seems to control the nucleotide-dependent binding of mitochondrial HSP70 to substrate proteins. Stimulates ATPase activity of mt-HSP70. May also serve to modulate the interconversion of oligomeric (inactive) and monomeric (active) forms of mt-HSP70. The polypeptide is GrpE protein homolog 2, mitochondrial (Grpel2) (Mus musculus (Mouse)).